Consider the following 301-residue polypeptide: Sulfate adenylyltransferase subunit 2 (301 aa).

Belongs to the PAPS reductase family. CysD subfamily. Heterodimer composed of CysD, the smaller subunit, and CysN.

It catalyses the reaction sulfate + ATP + H(+) = adenosine 5'-phosphosulfate + diphosphate. It participates in sulfur metabolism; hydrogen sulfide biosynthesis; sulfite from sulfate: step 1/3. Functionally, with CysN forms the ATP sulfurylase (ATPS) that catalyzes the adenylation of sulfate producing adenosine 5'-phosphosulfate (APS) and diphosphate, the first enzymatic step in sulfur assimilation pathway. APS synthesis involves the formation of a high-energy phosphoric-sulfuric acid anhydride bond driven by GTP hydrolysis by CysN coupled to ATP hydrolysis by CysD. This Geobacter metallireducens (strain ATCC 53774 / DSM 7210 / GS-15) protein is Sulfate adenylyltransferase subunit 2.